Here is a 39-residue protein sequence, read N- to C-terminus: MERNTNPNNLPVELNRTSLYLGLLFVFVTGVLMSSYFFN.

A helical membrane pass occupies residues 18–38; that stretch reads SLYLGLLFVFVTGVLMSSYFF.

Belongs to the PsbL family. In terms of assembly, PSII is composed of 1 copy each of membrane proteins PsbA, PsbB, PsbC, PsbD, PsbE, PsbF, PsbH, PsbI, PsbJ, PsbK, PsbL, PsbM, PsbT, PsbX, PsbY, PsbZ, Psb30/Ycf12, peripheral proteins PsbO, CyanoQ (PsbQ), PsbU, PsbV and a large number of cofactors. It forms dimeric complexes.

The protein resides in the cellular thylakoid membrane. In terms of biological role, one of the components of the core complex of photosystem II (PSII). PSII is a light-driven water:plastoquinone oxidoreductase that uses light energy to abstract electrons from H(2)O, generating O(2) and a proton gradient subsequently used for ATP formation. It consists of a core antenna complex that captures photons, and an electron transfer chain that converts photonic excitation into a charge separation. This subunit is found at the monomer-monomer interface and is required for correct PSII assembly and/or dimerization. In Synechococcus sp. (strain CC9902), this protein is Photosystem II reaction center protein L.